The primary structure comprises 292 residues: Protein LRATD1 (292 aa).

Serine 38 carries the post-translational modification Phosphoserine. The 96-residue stretch at 133–228 folds into the LRAT domain; it reads PATEQPAPAP…CRFGKREFKA (96 aa).

Belongs to the LRATD family.

It is found in the cytoplasm. Functionally, may play a role in cell morphology and motility. The sequence is that of Protein LRATD1 from Mus musculus (Mouse).